A 429-amino-acid chain; its full sequence is 3-phosphoshikimate 1-carboxyvinyltransferase (429 aa).

3 residues coordinate 3-phosphoshikimate: Lys22, Ser23, and Arg27. Lys22 lines the phosphoenolpyruvate pocket. Phosphoenolpyruvate contacts are provided by Gly94 and Arg122. Residues Ser167, Gln169, Asp315, and Lys342 each contribute to the 3-phosphoshikimate site. Gln169 serves as a coordination point for phosphoenolpyruvate. Asp315 acts as the Proton acceptor in catalysis. The phosphoenolpyruvate site is built by Arg346 and Arg388.

Belongs to the EPSP synthase family. As to quaternary structure, monomer.

It is found in the cytoplasm. The catalysed reaction is 3-phosphoshikimate + phosphoenolpyruvate = 5-O-(1-carboxyvinyl)-3-phosphoshikimate + phosphate. The protein operates within metabolic intermediate biosynthesis; chorismate biosynthesis; chorismate from D-erythrose 4-phosphate and phosphoenolpyruvate: step 6/7. Functionally, catalyzes the transfer of the enolpyruvyl moiety of phosphoenolpyruvate (PEP) to the 5-hydroxyl of shikimate-3-phosphate (S3P) to produce enolpyruvyl shikimate-3-phosphate and inorganic phosphate. This is 3-phosphoshikimate 1-carboxyvinyltransferase from Geotalea daltonii (strain DSM 22248 / JCM 15807 / FRC-32) (Geobacter daltonii).